Consider the following 517-residue polypeptide: Putative thymidine phosphorylase (517 aa).

It belongs to the thymidine/pyrimidine-nucleoside phosphorylase family. Type 2 subfamily.

It catalyses the reaction thymidine + phosphate = 2-deoxy-alpha-D-ribose 1-phosphate + thymine. The sequence is that of Putative thymidine phosphorylase from Legionella pneumophila (strain Paris).